The following is a 356-amino-acid chain: Protein-glutamate methylesterase/protein-glutamine glutaminase (356 aa).

The region spanning 4 to 121 (KVLIVDDSAL…QSGMLEYTDL (118 aa)) is the Response regulatory domain. D55 is modified (4-aspartylphosphate). In terms of domain architecture, CheB-type methylesterase spans 156–349 (PLTSSEKLII…RRVLEFFAAH (194 aa)). Active-site residues include S169, H195, and D291.

The protein belongs to the CheB family. Post-translationally, phosphorylated by CheA. Phosphorylation of the N-terminal regulatory domain activates the methylesterase activity.

The protein resides in the cytoplasm. It carries out the reaction [protein]-L-glutamate 5-O-methyl ester + H2O = L-glutamyl-[protein] + methanol + H(+). It catalyses the reaction L-glutaminyl-[protein] + H2O = L-glutamyl-[protein] + NH4(+). In terms of biological role, involved in chemotaxis. Part of a chemotaxis signal transduction system that modulates chemotaxis in response to various stimuli. Catalyzes the demethylation of specific methylglutamate residues introduced into the chemoreceptors (methyl-accepting chemotaxis proteins or MCP) by CheR. Also mediates the irreversible deamidation of specific glutamine residues to glutamic acid. This is Protein-glutamate methylesterase/protein-glutamine glutaminase from Thiobacillus denitrificans (strain ATCC 25259 / T1).